Reading from the N-terminus, the 306-residue chain is tRNA pseudouridine synthase B (306 aa).

Residue D43 is the Nucleophile of the active site.

It belongs to the pseudouridine synthase TruB family. Type 1 subfamily.

It carries out the reaction uridine(55) in tRNA = pseudouridine(55) in tRNA. Functionally, responsible for synthesis of pseudouridine from uracil-55 in the psi GC loop of transfer RNAs. The chain is tRNA pseudouridine synthase B from Lacticaseibacillus casei (strain BL23) (Lactobacillus casei).